A 393-amino-acid polypeptide reads, in one-letter code: MTNSNRIKLTWISFLSYALTGALVIVTGMVMGNIADYFHLPVSSMSNTFTFLNAGILISIFLNAWLMEIIPLKTQLRFGFILMVLAVAGLMFGHSLALFSAAMFVLGLVSGITMSIGTFLITQLYEGRQRGSRLLFTDSFFSMAGMIFPMVAAFLLARSIEWYWVYACIGLVYLAIFILTFGCEFPALGKHAQHSQAPVVKEKWGIGVLFLAVAALCYILGQLGFISWVPEYAKGLGMSLNDAGALVSDFWMSYMFGMWAFSFILRFFDLQRILTVLAGMAAVLMYLFITGTQAHMPWFILTLGFFSSAIYTSIITLGSQQTKVASPKLVNFILTCGTIGTMLTFVVTGPIVAHSGPQAALLTANGLYAVVFVMCFALGFVSRHRQHSAPATH.

Residues 1–10 (MTNSNRIKLT) lie on the Cytoplasmic side of the membrane. Residues 11-31 (WISFLSYALTGALVIVTGMVM) form a helical membrane-spanning segment. The Periplasmic segment spans residues 32 to 50 (GNIADYFHLPVSSMSNTFT). The chain crosses the membrane as a helical span at residues 51-71 (FLNAGILISIFLNAWLMEIIP). The Cytoplasmic segment spans residues 72–77 (LKTQLR). A helical membrane pass occupies residues 78 to 98 (FGFILMVLAVAGLMFGHSLAL). The Periplasmic portion of the chain corresponds to 99–100 (FS). Residues 101–121 (AAMFVLGLVSGITMSIGTFLI) traverse the membrane as a helical segment. The Cytoplasmic portion of the chain corresponds to 122–133 (TQLYEGRQRGSR). The helical transmembrane segment at 134–154 (LLFTDSFFSMAGMIFPMVAAF) threads the bilayer. Residues 155 to 161 (LLARSIE) lie on the Periplasmic side of the membrane. Residues 162–182 (WYWVYACIGLVYLAIFILTFG) form a helical membrane-spanning segment. Residues 183 to 205 (CEFPALGKHAQHSQAPVVKEKWG) are Cytoplasmic-facing. Residues 206–226 (IGVLFLAVAALCYILGQLGFI) form a helical membrane-spanning segment. At 227-244 (SWVPEYAKGLGMSLNDAG) the chain is on the periplasmic side. The helical transmembrane segment at 245–265 (ALVSDFWMSYMFGMWAFSFIL) threads the bilayer. The Cytoplasmic portion of the chain corresponds to 266–272 (RFFDLQR). Residues 273–293 (ILTVLAGMAAVLMYLFITGTQ) traverse the membrane as a helical segment. Residues 294-297 (AHMP) lie on the Periplasmic side of the membrane. The helical transmembrane segment at 298-318 (WFILTLGFFSSAIYTSIITLG) threads the bilayer. Residues 319–331 (SQQTKVASPKLVN) are Cytoplasmic-facing. The helical transmembrane segment at 332 to 352 (FILTCGTIGTMLTFVVTGPIV) threads the bilayer. The Periplasmic segment spans residues 353-360 (AHSGPQAA). Residues 361-381 (LLTANGLYAVVFVMCFALGFV) traverse the membrane as a helical segment. Residues 382 to 393 (SRHRQHSAPATH) are Cytoplasmic-facing.

Belongs to the major facilitator superfamily. TsgA family.

It is found in the cell inner membrane. This chain is Protein TsgA, found in Salmonella choleraesuis (strain SC-B67).